A 243-amino-acid chain; its full sequence is Proteasome subunit beta (243 aa).

Residues 1-46 (MFNPNNGSEFARNRARLDDTPNPYEPEVGSLPEGDRSQAGSDTVNK) are disordered. Positions 1–48 (MFNPNNGSEFARNRARLDDTPNPYEPEVGSLPEGDRSQAGSDTVNKTG) are cleaved as a propeptide — removed in mature form; by autocatalysis. Thr-49 acts as the Nucleophile in catalysis.

Belongs to the peptidase T1B family. The 20S proteasome core is composed of 14 alpha and 14 beta subunits that assemble into four stacked heptameric rings, resulting in a barrel-shaped structure. The two inner rings, each composed of seven catalytic beta subunits, are sandwiched by two outer rings, each composed of seven alpha subunits. The catalytic chamber with the active sites is on the inside of the barrel. Has a gated structure, the ends of the cylinder being occluded by the N-termini of the alpha-subunits. Is capped at one or both ends by the proteasome regulatory ATPase, PAN.

Its subcellular location is the cytoplasm. The catalysed reaction is Cleavage of peptide bonds with very broad specificity.. With respect to regulation, the formation of the proteasomal ATPase PAN-20S proteasome complex, via the docking of the C-termini of PAN into the intersubunit pockets in the alpha-rings, triggers opening of the gate for substrate entry. Interconversion between the open-gate and close-gate conformations leads to a dynamic regulation of the 20S proteasome proteolysis activity. In terms of biological role, component of the proteasome core, a large protease complex with broad specificity involved in protein degradation. The polypeptide is Proteasome subunit beta (Halobacterium salinarum (strain ATCC 29341 / DSM 671 / R1)).